Reading from the N-terminus, the 206-residue chain is FMN-dependent NADH:quinone oxidoreductase (206 aa).

FMN contacts are provided by residues Ser9, 15–17 (SVS), 95–98 (MYNF), and 139–142 (SRGG).

Belongs to the azoreductase type 1 family. Homodimer. FMN is required as a cofactor.

It catalyses the reaction 2 a quinone + NADH + H(+) = 2 a 1,4-benzosemiquinone + NAD(+). The enzyme catalyses N,N-dimethyl-1,4-phenylenediamine + anthranilate + 2 NAD(+) = 2-(4-dimethylaminophenyl)diazenylbenzoate + 2 NADH + 2 H(+). Its function is as follows. Quinone reductase that provides resistance to thiol-specific stress caused by electrophilic quinones. Functionally, also exhibits azoreductase activity. Catalyzes the reductive cleavage of the azo bond in aromatic azo compounds to the corresponding amines. The chain is FMN-dependent NADH:quinone oxidoreductase from Legionella pneumophila subsp. pneumophila (strain Philadelphia 1 / ATCC 33152 / DSM 7513).